Consider the following 59-residue polypeptide: Ribosome biogenesis protein Nop10 (59 aa).

This sequence belongs to the NOP10 family.

Its function is as follows. Involved in ribosome biogenesis; more specifically in 18S rRNA pseudouridylation and in cleavage of pre-rRNA. This is Ribosome biogenesis protein Nop10 from Thermococcus gammatolerans (strain DSM 15229 / JCM 11827 / EJ3).